The sequence spans 97 residues: Large ribosomal subunit protein eL21 (97 aa).

It belongs to the eukaryotic ribosomal protein eL21 family.

This chain is Large ribosomal subunit protein eL21, found in Methanosarcina mazei (strain ATCC BAA-159 / DSM 3647 / Goe1 / Go1 / JCM 11833 / OCM 88) (Methanosarcina frisia).